The following is a 165-amino-acid chain: Phosphopantetheine adenylyltransferase (165 aa).

S10 serves as a coordination point for substrate. ATP is bound by residues 10-11 (SF) and H18. 3 residues coordinate substrate: K42, L74, and R88. ATP is bound by residues 89–91 (GLR), E99, and 124–130 (YSYLSSS).

Belongs to the bacterial CoaD family. In terms of assembly, homohexamer. It depends on Mg(2+) as a cofactor.

The protein localises to the cytoplasm. The catalysed reaction is (R)-4'-phosphopantetheine + ATP + H(+) = 3'-dephospho-CoA + diphosphate. It functions in the pathway cofactor biosynthesis; coenzyme A biosynthesis; CoA from (R)-pantothenate: step 4/5. Its function is as follows. Reversibly transfers an adenylyl group from ATP to 4'-phosphopantetheine, yielding dephospho-CoA (dPCoA) and pyrophosphate. The protein is Phosphopantetheine adenylyltransferase of Halalkalibacterium halodurans (strain ATCC BAA-125 / DSM 18197 / FERM 7344 / JCM 9153 / C-125) (Bacillus halodurans).